We begin with the raw amino-acid sequence, 147 residues long: Neocarzinostatin (147 aa).

Positions 1–34 (MVPISIIRNRVAKVAVGSAAVLGLAVGFQTPAVA) are cleaved as a signal peptide. Cystine bridges form between C71-C81 and C122-C127.

This sequence belongs to the neocarzinostatin family.

NCS has antibiotic activity (for Gram-positive bacteria) and antitumor activity (for certain mouse tumors). NCS binds non-covalently to a chromophore which is the cytotoxic and mutagenic component of the antibiotic. The chromophore binds to DNA as a weak intercalator and causes single- and double-strand breaks. The sequence is that of Neocarzinostatin (ncsA) from Streptomyces carzinostaticus.